We begin with the raw amino-acid sequence, 288 residues long: Methyltransferase ucsB (288 aa).

S-adenosyl-L-methionine-binding positions include aspartate 87 and 121-122; that span reads DA.

The protein belongs to the class I-like SAM-binding methyltransferase superfamily.

It functions in the pathway mycotoxin biosynthesis. In terms of biological role, methyltransferase; part of the gene cluster that mediates the biosynthesis of UCS1025A, a member of the pyrrolizidinone family that acts as a strong telomerase inhibitor and displays potent antibacterial and antitumor properties. These compounds share a hemiaminal-containing pyrrolizidinone core fused with a gamma-lactone, giving a furopyrrolizidine that is connected to a decalin fragment. The polyketide synthase module (PKS) of the PKS-NRPS ucsA is responsible for the synthesis of the polyketide backbone via the condensation of an acetyl-CoA starter unit with 6 malonyl-CoA units. The downstream nonribosomal peptide synthetase (NRPS) module then amidates the carboxyl end of the polyketide with a 2S,3S-methylproline derived from L-isoleucine by the 2-oxoglutarate-dependent dioxygenase ucsF which converts L-isoleucine to (4S,5S)-4-methylpyrroline-5-carboxylate that is further converted to 2S,3S-methylproline by the pyrroline-5-carboxylate reductase ucsG. Reductive release of the completed aminoacyl polyketide from the assembly line can form the 3-pyrrolin-2-one structure via an intramolecular Knoevenagel reaction. Because ucsA lacks a designated enoylreductase (ER) domain, the required activity is provided the enoyl reductase ucsL. This keto acyclic precursor is the substrate of the Diels-Alderase ucsH, that catalyzes the Diels-Alder cycloaddition. Oxidation of the 3S-methyl group to a carboxylate by the cytochrome P450 monooxygenase ucsK allows an oxa-Michael cyclization that might involve the reductase/dehydrogenase ucsI and which furnishes the furopyrrolizidine. The oxidase ucsJ likely plays a critical role in stereoselective reduction of the C5-C6 double bond to afford the required R-configured carboxylate group. Further enolization and oxidation at C5 by an unidentified enzyme affords the last intermediate that can undergo oxa-Michael cyclization to yield UCS1025A. This Acremonium sp protein is Methyltransferase ucsB.